The following is a 643-amino-acid chain: MADELNEFQEAGNFNEEALMRLSNVCARLRRMQMLESDVEITVVDGELKRVPRQMEKVKDGQVENNAGGFVFPVSDETQVRRFLILGSDKGSYHQSSEKITIDNAQRIIKIIEQGNGHMVLKELALINAENRNPKMNAMIFTLAICARISTHDTTKKTECPMLNAYSDYIRALHDSALDLIPEVCRTPTHLFEFVDYCQTISESTKAGGAKSSTGWGRSMRNAISKWYTTKTTEKLAMLLTKYPQREGWSHRDLFRLAHPNLMDSRSHGQSEDRLEREQLFRFAVKGDLVKRKRKMSVEEVAEVEKVWDKKALKLPYTEEQLIKEEQSRALNLVEAYLKLKNEQSEEVIVAAIKKHGLVREHLPTTSLNSKLVWETLFDVSMPMTAMIRNLAKMTVVGALDEKRVDNIVKRLTDQEELRRSRIHPINLLTARAVYAQGRGDKGSLTWEPNQKICDALEAGFYKAFVNAPPTGKRYCLALDVSGSMTSRVSSSPLSCREAATGMSLINLHNEAEVRCVAFCDKLTELPFTKDWKIGQVNDYVNNLDFGRTDCGLPMTWATENNLKFDVFIIYTDNDTWAGEIHPFEAIKKYREASGIHDAKVIVMAMQAYDYSIADPSDAGMLDITGFDSAVPQIVHEFVTGKI.

In terms of domain architecture, TROVE spans 63-473 (VENNAGGFVF…AFVNAPPTGK (411 aa)). The RNA-binding stretch occupies residues 186-390 (RTPTHLFEFV…SMPMTAMIRN (205 aa)). A VWFA-like domain region spans residues 465-643 (FVNAPPTGKR…IVHEFVTGKI (179 aa)). The a divalent metal cation site is built by serine 482, serine 484, and threonine 549.

It belongs to the Ro 60 kDa family.

The protein localises to the cytoplasm. Functionally, RNA-binding protein that binds to misfolded non-coding RNAs, pre-5S rRNA, and several small cytoplasmic RNA molecules known as Y RNAs. The chain is RNA-binding protein RO60 from Caenorhabditis elegans.